The chain runs to 140 residues: Small ribosomal subunit protein uS19 (140 aa).

This sequence belongs to the universal ribosomal protein uS19 family.

Its function is as follows. Protein S19 forms a complex with S13 that binds strongly to the 16S ribosomal RNA. This is Small ribosomal subunit protein uS19 from Sulfolobus acidocaldarius (strain ATCC 33909 / DSM 639 / JCM 8929 / NBRC 15157 / NCIMB 11770).